A 236-amino-acid chain; its full sequence is Rho-related GTP-binding protein RhoV (236 aa).

The segment at 1 to 27 (MPPRELSEAEPPPLRAPTPPPRRRSAP) is disordered. Residues 10-20 (EPPPLRAPTPP) show a composition bias toward pro residues. Residue serine 25 is modified to Phosphoserine. Residues 38-45 (GDGAVGKS), 85-89 (DTAGQ), and 143-146 (TQAD) each bind GTP. Cysteine 234 carries S-palmitoyl cysteine lipidation.

It belongs to the small GTPase superfamily. Rho family. In terms of assembly, interacts with PAK2. Requires Mg(2+) as cofactor. In terms of tissue distribution, highly expressed in pancreas, placenta, and fetal brain.

The protein resides in the cell membrane. It localises to the endosome membrane. Its function is as follows. Plays a role in the control of the actin cytoskeleton via activation of the JNK pathway. This is Rho-related GTP-binding protein RhoV from Homo sapiens (Human).